The following is a 376-amino-acid chain: Flagellar P-ring protein (376 aa).

The N-terminal stretch at 1–29 (MTQRPFSLLSHLGRICLAAAMLAALPAQA) is a signal peptide.

This sequence belongs to the FlgI family. In terms of assembly, the basal body constitutes a major portion of the flagellar organelle and consists of four rings (L,P,S, and M) mounted on a central rod.

Its subcellular location is the periplasm. It is found in the bacterial flagellum basal body. In terms of biological role, assembles around the rod to form the L-ring and probably protects the motor/basal body from shearing forces during rotation. The chain is Flagellar P-ring protein from Bordetella avium (strain 197N).